Here is a 770-residue protein sequence, read N- to C-terminus: Probable zinc transporter protein DDB_G0291141 (770 aa).

The Cytoplasmic segment spans residues 1 to 36 (MAGSLDDSIYNNGRSGGGGGGFKFSKGFNKDSISKR). A helical membrane pass occupies residues 37–57 (IIMMLFFSKGIRAWSCIILLY). At 58 to 62 (FLQSS) the chain is on the extracellular side. The helical transmembrane segment at 63–83 (ISIISASFYMCLFSAIFSVVV) threads the bilayer. At 84 to 100 (EKPWNLLSSLRPSQIKK) the chain is on the cytoplasmic side. A helical transmembrane segment spans residues 101-117 (IIYHSIFNLLIIITWNS). Topologically, residues 118–123 (SIKFIG) are extracellular. The chain crosses the membrane as a helical span at residues 124-146 (PIGSILASDYTFSTYPLIFNSLL). The Cytoplasmic portion of the chain corresponds to 147–154 (QGNFLATD). A helical transmembrane segment spans residues 155 to 175 (MSRGSIMLMIGYFLIPLFGIS). Residues 176–184 (NRLDILGYT) are Extracellular-facing. The chain crosses the membrane as a helical span at residues 185 to 205 (SSQVFMIGLFSLIVHNVLVLW). Residues 206–224 (KKTIVRSWNSGSSGGKNKL) lie on the Cytoplasmic side of the membrane. A helical transmembrane segment spans residues 225 to 245 (SSLGSCVSTIILFVFKLFEGF). Topologically, residues 246-262 (SSGSSGSDSINQVSYSQ) are extracellular. Residues 263 to 283 (LFVIAIITFILYSLNQFIDDV) traverse the membrane as a helical segment. At 284 to 291 (SEKELTFN) the chain is on the cytoplasmic side. The helical transmembrane segment at 292 to 312 (VLSKVSLTSSVIFGLLAALFI) threads the bilayer. Residues 313-316 (GFKD) are Extracellular-facing. A helical membrane pass occupies residues 317-337 (FFHPILILSFIFIINAIHILY). Topologically, residues 338 to 404 (SKSNDIQPMT…QIVDKPTSRR (67 aa)) are cytoplasmic. Residues 405-425 (IFTFLVINLMFMFVEMAYGIW) traverse the membrane as a helical segment. Residues 426–434 (TNSLGLITD) are Extracellular-facing. A helical membrane pass occupies residues 435 to 455 (ACHMFFDATALFIALVAEVIS). At 456-469 (QWKQNDKYSYGYGR) the chain is on the cytoplasmic side. A helical membrane pass occupies residues 470 to 490 (FQVLSGFVNGIFLIFIAVTIL). At 491 to 507 (MESVERLLEPPEINTDK) the chain is on the extracellular side. The helical transmembrane segment at 508–528 (LLLVSVLGFIINLIGIFSFHG) threads the bilayer. Residues 529 to 592 (DHGHSHGGGG…GVFLHLLADT (64 aa)) lie on the Cytoplasmic side of the membrane. Residues 532-566 (HSHGGGGGHSHGGGEKKEKHHGHSHGGHGDHQQVT) are disordered. The chain crosses the membrane as a helical span at residues 593 to 613 (LGSVGVIVSSLIIQIWGYTLA). D614 is a topological domain (extracellular). The helical transmembrane segment at 615–635 (PICSLLISILIFLSVLPLIAN) threads the bilayer. At 636 to 770 (TAKTLLQCTP…SSSSHHHRHN (135 aa)) the chain is on the cytoplasmic side. The interval 751-770 (DIHHNHSSSSSSSSHHHRHN) is disordered.

Belongs to the cation diffusion facilitator (CDF) transporter (TC 2.A.4) family. SLC30A subfamily.

It localises to the membrane. Its function is as follows. May be involved in zinc transport from the cytoplasm to either intracellular organelles or extracellular spaces. The protein is Probable zinc transporter protein DDB_G0291141 of Dictyostelium discoideum (Social amoeba).